Consider the following 260-residue polypeptide: MPRRLWPFGQTKTSADEQALSEQIDPHRIPKHIAIIMDGNGRWAKRRGLPRVAGHRAGVESLRRVLEVCEDYNIAYLTVYAFSTENWKRPADEVNALFDLLVEYLHRELNTLHSKGVRIRAIGKIEDLPGGPRRELEKAIAKTANNTRLVLNVALNYGGRFEIVEAVKSIARLAAEGKVNPDQIDEKYMSQYLYTADVPDPDLLIRPSGELRLSNFLLWQSAYTEIWVTPTLWPDFGRKEMVQAIVDYQGRDRRFGGVKV.

Residue Asp38 is part of the active site. Asp38 serves as a coordination point for Mg(2+). Residues 39–42 (GNGR), Trp43, Arg51, His55, and 83–85 (STE) each bind substrate. Asn86 (proton acceptor) is an active-site residue. Residues Trp87, Arg89, Arg206, and 212 to 214 (RLS) each bind substrate. Glu225 is a binding site for Mg(2+).

It belongs to the UPP synthase family. As to quaternary structure, homodimer. Mg(2+) is required as a cofactor.

In terms of biological role, catalyzes the condensation of isopentenyl diphosphate (IPP) with allylic pyrophosphates generating different type of terpenoids. The chain is Isoprenyl transferase from Heliobacterium mobile (Heliobacillus mobilis).